The chain runs to 154 residues: Ribonuclease P protein subunit p21 (154 aa).

Residue Ala2 is modified to N-acetylalanine. Zn(2+) is bound by residues Cys62, Cys65, Cys92, and Cys95. The disordered stretch occupies residues 117-154; it reads QLGSQADSKPLQPLPNTAHSISDRLPEEKMQTQGSSNQ. Over residues 137–146 the composition is skewed to basic and acidic residues; sequence ISDRLPEEKM.

This sequence belongs to the eukaryotic/archaeal RNase P protein component 4 family. RNase P consists of a catalytic RNA moiety and about 10 protein subunits; POP1, POP4, POP5, POP7, RPP14, RPP21, RPP25, RPP30, RPP38 and RPP40. Within the RNase P complex, POP1, POP7 and RPP25 form the 'finger' subcomplex, POP5, RPP14, RPP40 and homodimeric RPP30 form the 'palm' subcomplex, and RPP21, POP4 and RPP38 form the 'wrist' subcomplex. All subunits of the RNase P complex interact with the catalytic RNA.

It localises to the nucleus. It is found in the nucleolus. Functionally, component of ribonuclease P, a ribonucleoprotein complex that generates mature tRNA molecules by cleaving their 5'-ends. The sequence is that of Ribonuclease P protein subunit p21 (RPP21) from Homo sapiens (Human).